A 225-amino-acid chain; its full sequence is Elongation factor 1-beta (225 aa).

The region spanning 1–90 (MGFGDLKSPA…PANVEDTTES (90 aa)) is the GST C-terminal domain. Residue Lys7 is modified to N6-acetyllysine. Residues Ser8 and Ser42 each carry the phosphoserine modification. A disordered region spans residues 79 to 98 (YGPANVEDTTESGATDSKDD). Phosphothreonine occurs at positions 88 and 93. A phosphoserine mark is found at Ser95 and Ser106. Lys147 is covalently cross-linked (Glycyl lysine isopeptide (Lys-Gly) (interchain with G-Cter in SUMO2)). Phosphoserine is present on Ser174.

This sequence belongs to the EF-1-beta/EF-1-delta family. EF-1 is composed of 4 subunits: alpha, beta (alpha subunit of the eEF1B subcomplex), delta (beta subunit of the eEF1B subcomplex), and gamma (gamma subunit of the eEF1B subcomplex). Interacts with elongation factor EEF1A1.

Its function is as follows. Catalytic subunit of the guanine nucleotide exchange factor (GEF) (eEF1B subcomplex) of the eukaryotic elongation factor 1 complex (eEF1). Stimulates the exchange of GDP for GTP on elongation factor 1A (eEF1A), probably by displacing GDP from the nucleotide binding pocket in eEF1A. This Sus scrofa (Pig) protein is Elongation factor 1-beta (EEF1B).